The following is a 200-amino-acid chain: Mpv17-like protein 2 (200 aa).

3 helical membrane-spanning segments follow: residues 24 to 40 (ALLL…MAAG), 63 to 83 (ASMF…YLWL), and 102 to 122 (VLVD…LGLG).

This sequence belongs to the peroxisomal membrane protein PXMP2/4 family. Interacts with the large mitochondrial ribosomal subunit.

It is found in the membrane. The protein localises to the mitochondrion inner membrane. Functionally, required for the assembly and stability of the mitochondrial ribosome. Is a positive regulator of mitochondrial protein synthesis. The sequence is that of Mpv17-like protein 2 (Mpv17l2) from Mus musculus (Mouse).